A 342-amino-acid chain; its full sequence is N-acetyl-gamma-glutamyl-phosphate reductase (342 aa).

Residue cysteine 149 is part of the active site.

The protein belongs to the NAGSA dehydrogenase family. Type 1 subfamily.

The protein localises to the cytoplasm. The catalysed reaction is N-acetyl-L-glutamate 5-semialdehyde + phosphate + NADP(+) = N-acetyl-L-glutamyl 5-phosphate + NADPH + H(+). It participates in amino-acid biosynthesis; L-arginine biosynthesis; N(2)-acetyl-L-ornithine from L-glutamate: step 3/4. Catalyzes the NADPH-dependent reduction of N-acetyl-5-glutamyl phosphate to yield N-acetyl-L-glutamate 5-semialdehyde. This chain is N-acetyl-gamma-glutamyl-phosphate reductase, found in Nitrosomonas europaea (strain ATCC 19718 / CIP 103999 / KCTC 2705 / NBRC 14298).